The chain runs to 191 residues: Thymidine kinase (191 aa).

ATP is bound by residues G15–T22 and D88–Q91. E89 acts as the Proton acceptor in catalysis. Residues C145, C148, C183, and C186 each coordinate Zn(2+).

This sequence belongs to the thymidine kinase family. Homotetramer.

The protein resides in the cytoplasm. It catalyses the reaction thymidine + ATP = dTMP + ADP + H(+). In Clostridium botulinum (strain Loch Maree / Type A3), this protein is Thymidine kinase.